The primary structure comprises 543 residues: CTP synthase (543 aa).

The interval M1–I270 is amidoligase domain. S18 contacts CTP. UTP is bound at residue S18. ATP-binding positions include S19–L24 and D76. D76 and E144 together coordinate Mg(2+). CTP-binding positions include D151 to E153, K191 to Q196, and K227. UTP contacts are provided by residues K191 to Q196 and K227. One can recognise a Glutamine amidotransferase type-1 domain in the interval T295–T537. Position 356 (G356) interacts with L-glutamine. C383 functions as the Nucleophile; for glutamine hydrolysis in the catalytic mechanism. Residues M384–Q387, E407, and R462 contribute to the L-glutamine site. Active-site residues include H510 and E512.

It belongs to the CTP synthase family. In terms of assembly, homotetramer.

The catalysed reaction is UTP + L-glutamine + ATP + H2O = CTP + L-glutamate + ADP + phosphate + 2 H(+). It carries out the reaction L-glutamine + H2O = L-glutamate + NH4(+). The enzyme catalyses UTP + NH4(+) + ATP = CTP + ADP + phosphate + 2 H(+). The protein operates within pyrimidine metabolism; CTP biosynthesis via de novo pathway; CTP from UDP: step 2/2. Allosterically activated by GTP, when glutamine is the substrate; GTP has no effect on the reaction when ammonia is the substrate. The allosteric effector GTP functions by stabilizing the protein conformation that binds the tetrahedral intermediate(s) formed during glutamine hydrolysis. Inhibited by the product CTP, via allosteric rather than competitive inhibition. Functionally, catalyzes the ATP-dependent amination of UTP to CTP with either L-glutamine or ammonia as the source of nitrogen. Regulates intracellular CTP levels through interactions with the four ribonucleotide triphosphates. This Ehrlichia ruminantium (strain Gardel) protein is CTP synthase.